The sequence spans 110 residues: V-type proton ATPase subunit G 1 (110 aa).

This sequence belongs to the V-ATPase G subunit family. In terms of assembly, V-ATPase is a heteromultimeric enzyme composed of a peripheral catalytic V1 complex (components A to H) attached to an integral membrane V0 proton pore complex (components: a, c, c', c'' and d).

Catalytic subunit of the peripheral V1 complex of vacuolar ATPase (V-ATPase). V-ATPase is responsible for acidifying a variety of intracellular compartments in eukaryotic cells. The chain is V-type proton ATPase subunit G 1 (VATG1) from Nicotiana tabacum (Common tobacco).